The chain runs to 261 residues: Thiazole synthase (261 aa).

The Schiff-base intermediate with DXP role is filled by Lys-97. 1-deoxy-D-xylulose 5-phosphate is bound by residues Gly-158, 184–185, and 206–207; these read AG and AS.

Belongs to the ThiG family. In terms of assembly, homotetramer. Forms heterodimers with either ThiH or ThiS.

The protein resides in the cytoplasm. The enzyme catalyses [ThiS sulfur-carrier protein]-C-terminal-Gly-aminoethanethioate + 2-iminoacetate + 1-deoxy-D-xylulose 5-phosphate = [ThiS sulfur-carrier protein]-C-terminal Gly-Gly + 2-[(2R,5Z)-2-carboxy-4-methylthiazol-5(2H)-ylidene]ethyl phosphate + 2 H2O + H(+). It participates in cofactor biosynthesis; thiamine diphosphate biosynthesis. In terms of biological role, catalyzes the rearrangement of 1-deoxy-D-xylulose 5-phosphate (DXP) to produce the thiazole phosphate moiety of thiamine. Sulfur is provided by the thiocarboxylate moiety of the carrier protein ThiS. In vitro, sulfur can be provided by H(2)S. This is Thiazole synthase from Corynebacterium diphtheriae (strain ATCC 700971 / NCTC 13129 / Biotype gravis).